A 219-amino-acid polypeptide reads, in one-letter code: Ribose-5-phosphate isomerase A (219 aa).

Residues 28-31, 81-84, and 94-97 contribute to the substrate site; these read TGST, DGAD, and KGGG. Residue Glu103 is the Proton acceptor of the active site. Lys121 contacts substrate.

Belongs to the ribose 5-phosphate isomerase family. In terms of assembly, homodimer.

The catalysed reaction is aldehydo-D-ribose 5-phosphate = D-ribulose 5-phosphate. It functions in the pathway carbohydrate degradation; pentose phosphate pathway; D-ribose 5-phosphate from D-ribulose 5-phosphate (non-oxidative stage): step 1/1. Functionally, catalyzes the reversible conversion of ribose-5-phosphate to ribulose 5-phosphate. The sequence is that of Ribose-5-phosphate isomerase A from Salmonella arizonae (strain ATCC BAA-731 / CDC346-86 / RSK2980).